Here is a 459-residue protein sequence, read N- to C-terminus: Cysteine--tRNA ligase (459 aa).

Cysteine 27 contributes to the Zn(2+) binding site. Positions 29–39 (PTVYDDAHLGH) match the 'HIGH' region motif. Zn(2+)-binding residues include cysteine 202, histidine 231, and glutamate 235. The 'KMSKS' region signature appears at 263–267 (KMSKS). Lysine 266 serves as a coordination point for ATP.

It belongs to the class-I aminoacyl-tRNA synthetase family. In terms of assembly, monomer. It depends on Zn(2+) as a cofactor.

Its subcellular location is the cytoplasm. It carries out the reaction tRNA(Cys) + L-cysteine + ATP = L-cysteinyl-tRNA(Cys) + AMP + diphosphate. The chain is Cysteine--tRNA ligase from Campylobacter fetus subsp. fetus (strain 82-40).